Here is a 232-residue protein sequence, read N- to C-terminus: Ribonuclease 3 (232 aa).

The RNase III domain maps to 6–133 (LKEIEENLGV…IIAAVYLDKG (128 aa)). Residue glutamate 46 participates in Mg(2+) binding. Residue aspartate 50 is part of the active site. 2 residues coordinate Mg(2+): aspartate 119 and glutamate 122. The active site involves glutamate 122. Residues 160–229 (DFKTKLQELL…AKQALDILEG (70 aa)) form the DRBM domain.

This sequence belongs to the ribonuclease III family. In terms of assembly, homodimer. Mg(2+) serves as cofactor.

The protein resides in the cytoplasm. It carries out the reaction Endonucleolytic cleavage to 5'-phosphomonoester.. Digests double-stranded RNA. Involved in the processing of primary rRNA transcript to yield the immediate precursors to the large and small rRNAs (23S and 16S). Processes some mRNAs, and tRNAs when they are encoded in the rRNA operon. Processes pre-crRNA and tracrRNA of type II CRISPR loci if present in the organism. This Clostridium beijerinckii (strain ATCC 51743 / NCIMB 8052) (Clostridium acetobutylicum) protein is Ribonuclease 3.